The primary structure comprises 615 residues: Sodium-dependent dopamine transporter (615 aa).

The tract at residues 1-39 is disordered; the sequence is MQLVPTDDPDEKIGRTSNGMQNATLPIDGPVNTEPKDPA. The Cytoplasmic segment spans residues 1–46; sequence MQLVPTDDPDEKIGRTSNGMQNATLPIDGPVNTEPKDPAREQWSGK. Residues 15-24 are compositionally biased toward polar residues; the sequence is RTSNGMQNAT. Residues 47-72 traverse the membrane as a helical segment; the sequence is LDFLLSVVGFAVDLGNIWRFPYLCFK. Na(+)-binding residues include Gly-55, Ala-57, Val-58, and Asn-62. Residues 73 to 76 lie on the Extracellular side of the membrane; sequence NGGG. The helical transmembrane segment at 77–100 threads the bilayer; the sequence is VFLIPYSIMVLLTGVPLFYMELCL. The Cytoplasmic portion of the chain corresponds to 101-120; that stretch reads GQYYRKGAITTWGRICPLFK. A helical transmembrane segment spans residues 121–151; it reads GIGYCVILTAFYVDFFYNVILAWGLHYLYTS. The Extracellular segment spans residues 152–229; sequence FSFNLPWASC…IRSVTDLGNV (78 aa). Cys-161 and Cys-170 are disulfide-bonded. Asn-162 and Asn-187 each carry an N-linked (GlcNAc...) asparagine glycan. A helical transmembrane segment spans residues 230 to 250; it reads RWDIALSLFVVYLICYFSMWK. At 251 to 253 the chain is on the cytoplasmic side; sequence GIH. A helical transmembrane segment spans residues 254-278; the sequence is TSGKVVWFTALFPYVVLGILFIRGV. Residues 279-302 lie on the Extracellular side of the membrane; the sequence is TLPGWQNGIEYYLRPNFEMLKRPS. Residues 303–328 form a helical membrane-spanning segment; sequence VWQDAATQVFFSLGPGFGVLMAYSSY. Na(+) is bound at residue Ser-314. Residues 329-334 lie on the Cytoplasmic side of the membrane; sequence NDFHNN. A helical membrane pass occupies residues 335–358; the sequence is VYVDALFTSFINCATSFLSGFVIF. Residue Asn-346 coordinates Na(+). Residues 359 to 398 are Extracellular-facing; the sequence is SVLGYMSCKSGKPIEAVAQEGPGLVFVVYPEALSTMPYAP. A helical transmembrane segment spans residues 399–424; it reads FWSVLFFLMLMTLGLDSSFGGSEAII. 3 residues coordinate Na(+): Leu-411, Asp-414, and Ser-415. Over 425-439 the chain is Cytoplasmic; that stretch reads TGLSDEFPILKKNRE. Residues 440 to 460 traverse the membrane as a helical segment; it reads VFVGCLFAFYMVIGIAMCTEG. Gly-461 is a topological domain (extracellular). Residues 462 to 488 form a helical membrane-spanning segment; the sequence is ILIMEWLIIYGTTWGLLIAVFCEAMVI. Residues 489–518 lie on the Cytoplasmic side of the membrane; the sequence is AYIYGLRQFVHDVKEMMGFRPGNYWKFCWS. The chain crosses the membrane as a helical span at residues 519–541; it reads CAAPFILLSMITSNFINYQALTY. The Extracellular segment spans residues 542-544; sequence QDY. Residues 545 to 565 form a helical membrane-spanning segment; the sequence is TYPTAANVIGIIFALSGASFI. Residues 566–615 are Cytoplasmic-facing; it reads PLVGIYKFVNARGNTISEKWQRVTMPYRKRPNQTEYIPIPTTQPHSDIML.

It belongs to the sodium:neurotransmitter symporter (SNF) (TC 2.A.22) family.

It localises to the cell membrane. Dopamine transporter. Terminates the action of dopamine by its high affinity sodium-dependent reuptake into presynaptic terminals. Plays a role in the learned avoidance behavior of animals exposed to food that induces mitochondrial stress. The polypeptide is Sodium-dependent dopamine transporter (Caenorhabditis elegans).